Consider the following 214-residue polypeptide: A-type ATP synthase subunit D (214 aa).

The protein belongs to the V-ATPase D subunit family. Has multiple subunits with at least A(3), B(3), C, D, E, F, H, I and proteolipid K(x).

The protein localises to the cell membrane. Component of the A-type ATP synthase that produces ATP from ADP in the presence of a proton gradient across the membrane. In Pyrococcus furiosus (strain ATCC 43587 / DSM 3638 / JCM 8422 / Vc1), this protein is A-type ATP synthase subunit D.